A 270-amino-acid chain; its full sequence is 5'-nucleotidase SurE (270 aa).

The a divalent metal cation site is built by D8, D9, S40, and N98.

The protein belongs to the SurE nucleotidase family. A divalent metal cation is required as a cofactor.

It is found in the cytoplasm. The catalysed reaction is a ribonucleoside 5'-phosphate + H2O = a ribonucleoside + phosphate. Its function is as follows. Nucleotidase that shows phosphatase activity on nucleoside 5'-monophosphates. In Cyanothece sp. (strain PCC 7425 / ATCC 29141), this protein is 5'-nucleotidase SurE.